The chain runs to 1236 residues: ATP-dependent helicase/nuclease subunit A (1236 aa).

A UvrD-like helicase ATP-binding domain is found at 2-457 (AHWTIEQEEA…VDLNKNFRSH (456 aa)). 23–30 (AAAGSGKT) is an ATP binding site. The UvrD-like helicase C-terminal domain maps to 515–816 (NTAKRVEICI…RIMSIHKSKG (302 aa)).

The protein belongs to the helicase family. AddA subfamily. As to quaternary structure, heterodimer of AddA and AddB/RexB. Mg(2+) is required as a cofactor.

The enzyme catalyses Couples ATP hydrolysis with the unwinding of duplex DNA by translocating in the 3'-5' direction.. It catalyses the reaction ATP + H2O = ADP + phosphate + H(+). In terms of biological role, the heterodimer acts as both an ATP-dependent DNA helicase and an ATP-dependent, dual-direction single-stranded exonuclease. Recognizes the chi site generating a DNA molecule suitable for the initiation of homologous recombination. The AddA nuclease domain is required for chi fragment generation; this subunit has the helicase and 3' -&gt; 5' nuclease activities. In Syntrophomonas wolfei subsp. wolfei (strain DSM 2245B / Goettingen), this protein is ATP-dependent helicase/nuclease subunit A.